The chain runs to 110 residues: Thioredoxin (110 aa).

Residues 3–108 form the Thioredoxin domain; it reads KPIEVHDSDF…YREIFDKVLA (106 aa). A disulfide bond links Cys-32 and Cys-35. An N6,N6-dimethyllysine; alternate modification is found at Lys-105. Lys-105 is subject to N6-methyllysine; alternate.

Its function is as follows. Participates in various redox reactions through the reversible oxidation of its active center dithiol to a disulfide and catalyzes dithiol-disulfide exchange reactions. In Chloroflexus aurantiacus (strain ATCC 29366 / DSM 635 / J-10-fl), this protein is Thioredoxin (trxA).